Consider the following 397-residue polypeptide: Oxygen-dependent coproporphyrinogen-III oxidase, chloroplastic (397 aa).

A disordered region spans residues glutamate 76–glutamate 95. The segment covering methionine 79 to valine 90 has biased composition (polar residues). The interval valine 135–lysine 144 is important for dimerization. Serine 185 lines the substrate pocket. Histidine 199 serves as the catalytic Proton donor. Residues asparagine 201–arginine 203 and glycine 355–serine 360 contribute to the substrate site. The tract at residues tyrosine 337–glutamate 372 is important for dimerization.

The protein belongs to the aerobic coproporphyrinogen-III oxidase family. Homodimer.

It is found in the plastid. The protein localises to the chloroplast. It catalyses the reaction coproporphyrinogen III + O2 + 2 H(+) = protoporphyrinogen IX + 2 CO2 + 2 H2O. The protein operates within porphyrin-containing compound metabolism; protoporphyrin-IX biosynthesis; protoporphyrinogen-IX from coproporphyrinogen-III (O2 route): step 1/1. Functionally, involved in the heme and chlorophyll biosynthesis. Catalyzes the aerobic oxidative decarboxylation of propionate groups of rings A and B of coproporphyrinogen-III to yield the vinyl groups in protoporphyrinogen-IX. This chain is Oxygen-dependent coproporphyrinogen-III oxidase, chloroplastic (CPX), found in Nicotiana tabacum (Common tobacco).